The primary structure comprises 98 residues: NADH-ubiquinone oxidoreductase chain 4L (98 aa).

The next 3 membrane-spanning stretches (helical) occupy residues 1–21 (MTMV…GLLM), 29–49 (SLLC…ITIL), and 61–81 (IILL…LVMV).

Belongs to the complex I subunit 4L family. Core subunit of respiratory chain NADH dehydrogenase (Complex I) which is composed of 45 different subunits.

It is found in the mitochondrion inner membrane. The enzyme catalyses a ubiquinone + NADH + 5 H(+)(in) = a ubiquinol + NAD(+) + 4 H(+)(out). Its function is as follows. Core subunit of the mitochondrial membrane respiratory chain NADH dehydrogenase (Complex I) which catalyzes electron transfer from NADH through the respiratory chain, using ubiquinone as an electron acceptor. Part of the enzyme membrane arm which is embedded in the lipid bilayer and involved in proton translocation. This Ommatophoca rossii (Ross seal) protein is NADH-ubiquinone oxidoreductase chain 4L (MT-ND4L).